A 439-amino-acid polypeptide reads, in one-letter code: Putative FBD-associated F-box protein At1g05080 (439 aa).

Residues 12–58 (EDRISVLPEDLLVVILDLLPTKDVVATMILSKRWLSIWTMVRTLEYT) form the F-box domain. Positions 360-410 (SWKQPSHVPECLSSQLEIFEWRDYGDRIIEEEFLTYVLANSKRLKTATISL) constitute an FBD domain.

The polypeptide is Putative FBD-associated F-box protein At1g05080 (Arabidopsis thaliana (Mouse-ear cress)).